A 209-amino-acid polypeptide reads, in one-letter code: Large ribosomal subunit protein uL3 (209 aa).

Over residues 112-122 (GTTRGHGTQGN) the composition is skewed to polar residues. The segment at 112-146 (GTTRGHGTQGNIKRWGQSRGPETHGSRYHRIPGSM) is disordered.

It belongs to the universal ribosomal protein uL3 family. In terms of assembly, part of the 50S ribosomal subunit. Forms a cluster with proteins L14 and L19.

One of the primary rRNA binding proteins, it binds directly near the 3'-end of the 23S rRNA, where it nucleates assembly of the 50S subunit. The protein is Large ribosomal subunit protein uL3 of Lactobacillus johnsonii (strain CNCM I-12250 / La1 / NCC 533).